A 179-amino-acid chain; its full sequence is Large ribosomal subunit protein uL6 (179 aa).

It belongs to the universal ribosomal protein uL6 family. As to quaternary structure, part of the 50S ribosomal subunit.

In terms of biological role, this protein binds to the 23S rRNA, and is important in its secondary structure. It is located near the subunit interface in the base of the L7/L12 stalk, and near the tRNA binding site of the peptidyltransferase center. This chain is Large ribosomal subunit protein uL6, found in Alkaliphilus oremlandii (strain OhILAs) (Clostridium oremlandii (strain OhILAs)).